The following is a 447-amino-acid chain: Voltage-gated purine nucleotide uniporter SLC17A9 (447 aa).

The interval 1 to 26 is disordered; sequence MPSQRSSLMQPIPEETRKTPSAAAED. A compositionally biased stretch (basic and acidic residues) spans 14–26; sequence EETRKTPSAAAED. A run of 11 helical transmembrane segments spans residues 36–58, 74–94, 103–123, 129–149, 169–189, 197–217, 252–272, 287–307, 327–347, 380–400, and 413–433; these read LWTG…MPVC, GIVL…GGHL, VILL…LLAH, LAFV…YFPA, TVGA…SVLL, VFYF…KYLL, VWAV…LLSW, WVFN…SGFI, VMGL…TSFL, GFLF…GVCL, and CVFH…LVFG.

This sequence belongs to the major facilitator superfamily. Sodium/anion cotransporter family.

The protein resides in the cytoplasmic vesicle. It localises to the secretory vesicle. The protein localises to the chromaffin granule membrane. Its subcellular location is the secretory vesicle membrane. It is found in the lysosome membrane. It catalyses the reaction ATP(in) = ATP(out). The enzyme catalyses ADP(in) = ADP(out). It carries out the reaction GTP(in) = GTP(out). With respect to regulation, activity is chloride-dependent. Its function is as follows. Voltage-gated ATP nucleotide uniporter that can also transport the purine nucleotides ADP and GTP. Uses the membrane potential as the driving force to control ATP accumulation in lysosomes and secretory vesicles. By controlling ATP storage in lysosomes, regulates ATP-dependent proteins of these organelles. Also indirectly regulates the exocytosis of ATP through its import into lysosomes in astrocytes and secretory vesicles such as adrenal chromaffin granules, mucin granules and synaptic vesicles. In Rattus norvegicus (Rat), this protein is Voltage-gated purine nucleotide uniporter SLC17A9.